The sequence spans 546 residues: Glucose-6-phosphate isomerase (546 aa).

Glu353 acts as the Proton donor in catalysis. Active-site residues include His384 and Lys512.

The protein belongs to the GPI family.

It is found in the cytoplasm. The enzyme catalyses alpha-D-glucose 6-phosphate = beta-D-fructose 6-phosphate. Its pathway is carbohydrate biosynthesis; gluconeogenesis. It functions in the pathway carbohydrate degradation; glycolysis; D-glyceraldehyde 3-phosphate and glycerone phosphate from D-glucose: step 2/4. Its function is as follows. Catalyzes the reversible isomerization of glucose-6-phosphate to fructose-6-phosphate. The protein is Glucose-6-phosphate isomerase of Actinobacillus pleuropneumoniae serotype 5b (strain L20).